The following is a 404-amino-acid chain: Cysteine desulfurase IscS (404 aa).

Pyridoxal 5'-phosphate contacts are provided by residues 75–76 (AT), Asn155, Gln183, and 203–205 (SGH). Residue Lys206 is modified to N6-(pyridoxal phosphate)lysine. Thr243 serves as a coordination point for pyridoxal 5'-phosphate. The active-site Cysteine persulfide intermediate is the Cys328. A [2Fe-2S] cluster-binding site is contributed by Cys328.

It belongs to the class-V pyridoxal-phosphate-dependent aminotransferase family. NifS/IscS subfamily. Homodimer. Forms a heterotetramer with IscU, interacts with other sulfur acceptors. Pyridoxal 5'-phosphate is required as a cofactor.

The protein localises to the cytoplasm. It catalyses the reaction (sulfur carrier)-H + L-cysteine = (sulfur carrier)-SH + L-alanine. Its pathway is cofactor biosynthesis; iron-sulfur cluster biosynthesis. Functionally, master enzyme that delivers sulfur to a number of partners involved in Fe-S cluster assembly, tRNA modification or cofactor biosynthesis. Catalyzes the removal of elemental sulfur and selenium atoms from cysteine and selenocysteine to produce alanine. Functions as a sulfur delivery protein for Fe-S cluster synthesis onto IscU, an Fe-S scaffold assembly protein, as well as other S acceptor proteins. Also functions as a selenium delivery protein in the pathway for the biosynthesis of selenophosphate. This is Cysteine desulfurase IscS from Salmonella paratyphi C (strain RKS4594).